We begin with the raw amino-acid sequence, 450 residues long: Chromosomal replication initiator protein DnaA (450 aa).

The tract at residues 1–84 is domain I, interacts with DnaA modulators; the sequence is MENIHDLWDR…AVKFIIPPNQ (84 aa). Residues 84–111 are domain II; the sequence is QADEKLELPSSAKKQRKPYEEANDFPQS. The segment at 112-328 is domain III, AAA+ region; that stretch reads MLNPKYTFDT…GALIRVVAYS (217 aa). Residues Gly-156, Gly-158, Lys-159, and Thr-160 each coordinate ATP. The interval 329 to 450 is domain IV, binds dsDNA; the sequence is SLINKEITAD…KEIQEKLKQL (122 aa).

This sequence belongs to the DnaA family. As to quaternary structure, oligomerizes as a right-handed, spiral filament on DNA at oriC.

It is found in the cytoplasm. In terms of biological role, plays an essential role in the initiation and regulation of chromosomal replication. ATP-DnaA binds to the origin of replication (oriC) to initiate formation of the DNA replication initiation complex once per cell cycle. Binds the DnaA box (a 9 base pair repeat at the origin) and separates the double-stranded (ds)DNA. Forms a right-handed helical filament on oriC DNA; dsDNA binds to the exterior of the filament while single-stranded (ss)DNA is stabiized in the filament's interior. The ATP-DnaA-oriC complex binds and stabilizes one strand of the AT-rich DNA unwinding element (DUE), permitting loading of DNA polymerase. After initiation quickly degrades to an ADP-DnaA complex that is not apt for DNA replication. Binds acidic phospholipids. This is Chromosomal replication initiator protein DnaA from Geobacillus thermodenitrificans (strain NG80-2).